A 320-amino-acid polypeptide reads, in one-letter code: Probable movement protein (320 aa).

Catalysis depends on residues His-144, Asp-171, and Ser-199. 2 disordered regions span residues 251–270 (RRSR…QEKR) and 286–320 (EFGR…GSSP).

This sequence belongs to the tobamoviruses movement protein family.

Its function is as follows. May play a role in virus cell to cell movement by increasing the size exclusion limit of plasmodesmata and forming a complex with viral RNA to assist its movement. May also have a papain-like protease activity and cleave the genome polyprotein. In Malus sylvestris (European crab apple), this protein is Probable movement protein.